We begin with the raw amino-acid sequence, 152 residues long: MVKAVAVLSSSEGVSGTIFFTQDGDAPTTVTGNVSGLKPGLHGFHVHALGDTTNGCMSTGPHYNPAGKEHGAPEDEVRHAGDLGNITVGEDGTASFTLTDKQIPLAGPQSIIGRAVVVHADPDDLGKGGHELSKTTGNAGGRVACGIIGLQG.

3 residues coordinate Cu cation: His45, His47, and His62. A disulfide bridge links Cys56 with Cys145. His62, His70, His79, and Asp82 together coordinate Zn(2+). Residue His119 coordinates Cu cation.

This sequence belongs to the Cu-Zn superoxide dismutase family. In terms of assembly, homodimer. Requires Cu cation as cofactor. The cofactor is Zn(2+).

Its subcellular location is the cytoplasm. The enzyme catalyses 2 superoxide + 2 H(+) = H2O2 + O2. Functionally, destroys radicals which are normally produced within the cells and which are toxic to biological systems. The protein is Superoxide dismutase [Cu-Zn] (SODCC) of Nicotiana plumbaginifolia (Leadwort-leaved tobacco).